Consider the following 146-residue polypeptide: Angiogenin (146 aa).

Residues 1–24 form the signal peptide; sequence MVMGLGLFLLVFMLGLGLTLPTLA. The residue at position 25 (glutamine 25) is a Pyrrolidone carboxylic acid. The active-site Proton acceptor is histidine 37. Arginine 45 lines the tRNA pocket. 3 disulfide bridges follow: cysteine 50–cysteine 105, cysteine 63–cysteine 116, and cysteine 81–cysteine 131. The short motif at 55–59 is the Nucleolar localization signal element; the sequence is RRRHL. Residues cysteine 105 and isoleucine 127 each coordinate tRNA. Catalysis depends on histidine 138, which acts as the Proton donor.

The protein belongs to the pancreatic ribonuclease family. Homodimer. Interacts with RNH1; inhibiting ANG ribonuclease activity. Interacts with PCNA.

Its subcellular location is the secreted. The protein resides in the nucleus. It localises to the nucleolus. It is found in the cytoplasm. The protein localises to the stress granule. Has weak tRNA ribonuclease activity by itself due to partial autoinhibition by its C-terminus, which folds into a short alpha-helix that partially occludes the substrate-binding site. In absence of stress, the ribonuclease activity is inhibited by RNH1 in the cytoplasm. In response to stress, dissociates from RNH1 in the cytoplasm and associates with cytoplasmic ribosomes with vacant A-sites: ribosomes directly activate the tRNA ribonuclease activity of ANG by refolding the C-terminal alpha-helix. In response to stress, the angiogenic activity of ANG is inhibited by RNH1 in the nucleus. Secreted ribonuclease that can either promote or restrict cell proliferation of target cells, depending on the context. Endocytosed in target cells via its receptor PLXNB2 and translocates to the cytoplasm or nucleus. Under stress conditions, localizes to the cytoplasm and promotes the assembly of stress granules (SGs): specifically cleaves a subset of tRNAs within anticodon loops to produce tRNA-derived stress-induced fragments (tiRNAs), resulting in translation repression and inhibition of cell proliferation. tiRNas also prevent formation of apoptosome, thereby promoting cell survival. Preferentially cleaves RNAs between a pyrimidine and an adenosine residue, suggesting that it cleaves the anticodon loop of tRNA(Ala) (32-UUAGCAU-38) after positions 33 and 36. Cleaves a subset of tRNAs, including tRNA(Ala), tRNA(Glu), tRNA(Gly), tRNA(Lys), tRNA(Val), tRNA(His), tRNA(Asp) and tRNA(Sec). Under growth conditions and in differentiated cells, translocates to the nucleus and stimulates ribosomal RNA (rRNA) transcription, including that containing the initiation site sequences of 45S rRNA, thereby promoting cell growth and proliferation. Angiogenin induces vascularization of normal and malignant tissues via its ability to promote rRNA transcription. Involved in hematopoietic stem and progenitor cell (HSPC) growth and survival by promoting rRNA transcription in growth conditions and inhibiting translation in response to stress, respectively. Mediates the crosstalk between myeloid and intestinal epithelial cells to protect the intestinal epithelial barrier integrity: secreted by myeloid cells and promotes intestinal epithelial cells proliferation and survival. Also mediates osteoclast-endothelial cell crosstalk in growing bone: produced by osteoclasts and protects the neighboring vascular cells against senescence by promoting rRNA transcription. This chain is Angiogenin (ANG), found in Papio hamadryas (Hamadryas baboon).